Reading from the N-terminus, the 461-residue chain is tRNA modification GTPase MnmE (461 aa).

Residues R22, E87, and R126 each contribute to the (6S)-5-formyl-5,6,7,8-tetrahydrofolate site. Residues 222-382 form the TrmE-type G domain; sequence GLKTVIVGKP…LEETIFNMVV (161 aa). N232 is a binding site for K(+). GTP contacts are provided by residues 232–237, 251–257, and 276–279; these read NVGKSS, TDIPGTT, and DTAG. S236 contributes to the Mg(2+) binding site. Residues T251, I253, and T256 each contribute to the K(+) site. Residue T257 participates in Mg(2+) binding. K461 contacts (6S)-5-formyl-5,6,7,8-tetrahydrofolate.

Belongs to the TRAFAC class TrmE-Era-EngA-EngB-Septin-like GTPase superfamily. TrmE GTPase family. In terms of assembly, homodimer. Heterotetramer of two MnmE and two MnmG subunits. K(+) serves as cofactor.

It localises to the cytoplasm. Its function is as follows. Exhibits a very high intrinsic GTPase hydrolysis rate. Involved in the addition of a carboxymethylaminomethyl (cmnm) group at the wobble position (U34) of certain tRNAs, forming tRNA-cmnm(5)s(2)U34. The protein is tRNA modification GTPase MnmE of Desulforamulus reducens (strain ATCC BAA-1160 / DSM 100696 / MI-1) (Desulfotomaculum reducens).